Here is a 287-residue protein sequence, read N- to C-terminus: MLYLVGLGLSDETDITVKGLEVVKKAERVYLEAYTSILLVDQATLESYYGRPIVVADREMVESNSDEILRDADKVDVAFCVVGDPFGATTHTDLVLRARELGIQVRTVPNASIMSGIGAAGLQLYNFGQTVSMVFFLDNWRPASFYDRIKENRSIGLHTLVLLDIKVKEQSLENMARGRKIYEPPRYMTVGTCAQQMLEIEEEKQEGVYGPESLAIGCARVGGKTEKFVSGTLKELCDADDLLGPPLHSLILLGRRTHELEHDFVREFAVNKENWDRIWKAEYCGKQ.

S-adenosyl-L-methionine-binding positions include L9, D84, G87, 112 to 113, L163, V221, and H248; that span reads SI.

Belongs to the diphthine synthase family.

Its subcellular location is the cytoplasm. It carries out the reaction 2-[(3S)-amino-3-carboxypropyl]-L-histidyl-[translation elongation factor 2] + 4 S-adenosyl-L-methionine = diphthine methyl ester-[translation elongation factor 2] + 4 S-adenosyl-L-homocysteine + 3 H(+). It functions in the pathway protein modification; peptidyl-diphthamide biosynthesis. S-adenosyl-L-methionine-dependent methyltransferase that catalyzes four methylations of the modified target histidine residue in translation elongation factor 2 (EF-2), to form an intermediate called diphthine methyl ester. The four successive methylation reactions represent the second step of diphthamide biosynthesis. This is Diphthine methyl ester synthase (dph-5) from Neurospora crassa (strain ATCC 24698 / 74-OR23-1A / CBS 708.71 / DSM 1257 / FGSC 987).